The chain runs to 96 residues: UPF0235 protein MK0273 (96 aa).

This sequence belongs to the UPF0235 family.

This Methanopyrus kandleri (strain AV19 / DSM 6324 / JCM 9639 / NBRC 100938) protein is UPF0235 protein MK0273.